A 146-amino-acid chain; its full sequence is Ribosome maturation factor RimP (146 aa).

The protein belongs to the RimP family.

The protein resides in the cytoplasm. Functionally, required for maturation of 30S ribosomal subunits. This is Ribosome maturation factor RimP from Helicobacter pylori (strain Shi470).